The chain runs to 142 residues: Large ribosomal subunit protein uL11 (142 aa).

It belongs to the universal ribosomal protein uL11 family. As to quaternary structure, part of the ribosomal stalk of the 50S ribosomal subunit. Interacts with L10 and the large rRNA to form the base of the stalk. L10 forms an elongated spine to which L12 dimers bind in a sequential fashion forming a multimeric L10(L12)X complex. One or more lysine residues are methylated.

Forms part of the ribosomal stalk which helps the ribosome interact with GTP-bound translation factors. The sequence is that of Large ribosomal subunit protein uL11 from Nocardioides sp. (strain ATCC BAA-499 / JS614).